Here is a 329-residue protein sequence, read N- to C-terminus: T-cell acute lymphocytic leukemia protein 1 homolog (329 aa).

3 disordered regions span residues 1–28 (MTER…RMAP), 40–78 (ETSR…KGRD), and 91–125 (TELC…SPPA). At Ser12 the chain carries Phosphoserine. Residues 58–70 (SGAGGGPASGGGA) show a composition bias toward gly residues. A compositionally biased stretch (pro residues) spans 96–106 (PPGPAPAPAPA). Ser122 carries the phosphoserine; by MAPK modification. At Ser172 the chain carries Phosphoserine. The 53-residue stretch at 187 to 239 (VRRIFTNSRERWRQQNVNGAFAELRKLIPTHPPDKKLSKNEILRLAMKYINFL) folds into the bHLH domain. The disordered stretch occupies residues 247–329 (EEEGTQRAKP…LPAADGAGPR (83 aa)). The span at 263–273 (GAGGGGAGGGI) shows a compositional bias: gly residues. The segment covering 317–329 (PALLPAADGAGPR) has biased composition (low complexity).

As to quaternary structure, efficient DNA binding requires dimerization with another bHLH protein. Forms heterodimers with TCF3. Binds to the LIM domain containing protein LMO2 and to DRG1. Can assemble in a complex with LDB1 and LMO2. Component of a TAL-1 complex composed at least of CBFA2T3, LDB1, TAL1 and TCF3. Interacts with SBNO2; this interaction inhibits TAL1 occupancy of the DCSTAMP promoter, leading to the activation of the DCSTAMP promoter by the transcription factor MITF. Phosphorylated on serine residues. Phosphorylation of Ser-122 by MAPK is strongly stimulated by hypoxia. In terms of processing, ubiquitinated; subsequent to hypoxia-dependent phosphorylation of Ser-122, ubiquitination targets the protein for rapid degradation via the ubiquitin system. This process may be characteristic for microvascular endothelial cells, since it could not be observed in large vessel endothelial cells. Erythroid and myeloid cells.

Its subcellular location is the nucleus. Its function is as follows. Implicated in the genesis of hemopoietic malignancies. It may play an important role in hemopoietic differentiation. Serves as a positive regulator of erythroid differentiation. This chain is T-cell acute lymphocytic leukemia protein 1 homolog (Tal1), found in Mus musculus (Mouse).